The sequence spans 1722 residues: Signal-induced proliferation-associated 1-like protein 2 (1722 aa).

Basic and acidic residues predominate over residues 1–12 (MSDPRQSQEEKH). 2 disordered regions span residues 1-29 (MSDPRQSQEEKHKLGRASSKFKDPPRIMQ) and 42-72 (NGNMGPTTSLNASNSNETGGGGPANGTPAVP). Over residues 45–56 (MGPTTSLNASNS) the composition is skewed to polar residues. The residue at position 148 (Ser-148) is a Phosphoserine. The span at 360–377 (GASAASQTQMPTGQTGNC) shows a compositional bias: polar residues. Residues 360–401 (GASAASQTQMPTGQTGNCESPLGSKEDLNSKENLDADEGDGK) form a disordered region. A phosphoserine mark is found at Ser-379 and Ser-383. Over residues 383–401 (SKEDLNSKENLDADEGDGK) the composition is skewed to basic and acidic residues. In terms of domain architecture, Rap-GAP spans 595–812 (LLKLDEQGLS…RTRQEYLKDL (218 aa)). In terms of domain architecture, PDZ spans 950–1026 (EMTLRRNGLG…VKVVIIQPHD (77 aa)). Ser-1029 carries the phosphoserine modification. Disordered regions lie at residues 1067 to 1245 (HRVP…FGSG) and 1330 to 1360 (EGSMGDLSEISSHSSGSHHSGSPSAHCSKSS). Composition is skewed to low complexity over residues 1093–1102 (QQLLQQAQAA) and 1119–1130 (SSPSNQSSSSDP). Basic and acidic residues-rich tracts occupy residues 1164–1183 (DGAREREDTMEASRHPETKW) and 1194–1217 (YKERALQKDGSCKDSPNKLSHIGD). The span at 1219-1236 (SCSSHSSSNTLSSNTSSN) shows a compositional bias: low complexity. Ser-1244 bears the Phosphoserine mark. Residues 1337–1360 (SEISSHSSGSHHSGSPSAHCSKSS) show a composition bias toward low complexity. Phosphoserine occurs at positions 1461, 1472, 1478, 1488, 1549, 1552, and 1591. The stretch at 1654-1712 (LTGKVNQLELILRQLQTDLRKEKQDKAVLQAEVQHLRQDNMRLQEESQTATAQLRKFTE) forms a coiled coil.

The sequence is that of Signal-induced proliferation-associated 1-like protein 2 (SIPA1L2) from Homo sapiens (Human).